The sequence spans 76 residues: Putative membrane protein insertion efficiency factor (76 aa).

This sequence belongs to the UPF0161 family.

It localises to the cell inner membrane. Functionally, could be involved in insertion of integral membrane proteins into the membrane. This Paraburkholderia phytofirmans (strain DSM 17436 / LMG 22146 / PsJN) (Burkholderia phytofirmans) protein is Putative membrane protein insertion efficiency factor.